Consider the following 509-residue polypeptide: Dihydrolipoyl dehydrogenase, mitochondrial (509 aa).

Residues 1-35 (MQSWSRVYCSLAKRGHFNRISHGLQGLSAVPLRTY) constitute a mitochondrion transit peptide. Lys-66 bears the N6-acetyllysine; alternate mark. Lys-66 is modified (N6-succinyllysine; alternate). Residues 71–80 (EKNETLGGTC) and Lys-89 each bind FAD. A disulfide bridge links Cys-80 with Cys-85. An N6-acetyllysine; alternate mark is found at Lys-104, Lys-122, Lys-132, and Lys-143. Lys-104, Lys-122, Lys-132, and Lys-143 each carry N6-succinyllysine; alternate. An FAD-binding site is contributed by Gly-154. 2 positions are modified to N6-succinyllysine: Lys-159 and Lys-166. Residue 183–185 (TGS) participates in FAD binding. NAD(+) is bound by residues 220 to 227 (GAGVIGVE) and Glu-243. An N6-succinyllysine mark is found at Lys-273 and Lys-277. Val-278 provides a ligand contact to NAD(+). Ser-285 and Ser-297 each carry phosphoserine. Gly-314 lines the NAD(+) pocket. An N6-acetyllysine modification is found at Lys-346. Residues Asp-355 and 361–364 (MLAH) contribute to the FAD site. An N6-acetyllysine; alternate modification is found at Lys-410. Lys-410 bears the N6-succinyllysine; alternate mark. N6-acetyllysine is present on residues Lys-417 and Lys-420. Lys-430 carries the N6-succinyllysine modification. His-487 serves as the catalytic Proton acceptor. Ser-502 is modified (phosphoserine). N6-acetyllysine; alternate is present on Lys-505. Lys-505 is modified (N6-succinyllysine; alternate).

This sequence belongs to the class-I pyridine nucleotide-disulfide oxidoreductase family. Homodimer. Part of the multimeric pyruvate dehydrogenase complex that contains multiple copies of pyruvate dehydrogenase (subunits PDHA (PDHA1 or PDHA2) and PDHB, E1), dihydrolipoamide acetyltransferase (DLAT, E2) and lipoamide dehydrogenase (DLD, E3). These subunits are bound to an inner core composed of about 48 DLAT and 12 PDHX molecules (by non covalent bonds). The 2-oxoglutarate dehydrogenase complex is composed of OGDH (2-oxoglutarate dehydrogenase; E1), DLST (dihydrolipoamide succinyltransferase; E2), DLD (dihydrolipoamide dehydrogenase; E3) and the assembly factor KGD4. It contains multiple copies of the three enzymatic components (E1, E2 and E3). In the nucleus, the 2-oxoglutarate dehydrogenase complex associates with KAT2A. Interacts with PDHX. Requires FAD as cofactor. Tyrosine phosphorylated.

The protein resides in the mitochondrion matrix. Its subcellular location is the nucleus. It localises to the cell projection. It is found in the cilium. The protein localises to the flagellum. The protein resides in the cytoplasmic vesicle. Its subcellular location is the secretory vesicle. It localises to the acrosome. The catalysed reaction is N(6)-[(R)-dihydrolipoyl]-L-lysyl-[protein] + NAD(+) = N(6)-[(R)-lipoyl]-L-lysyl-[protein] + NADH + H(+). With respect to regulation, disruption of native heterodimer state inhibits primary dihydrolipoamide dehydrogenase activity and induces serine protease activity. Functionally, lipoamide dehydrogenase is a component of the glycine cleavage system as well as an E3 component of three alpha-ketoacid dehydrogenase complexes (pyruvate-, alpha-ketoglutarate-, and branched-chain amino acid-dehydrogenase complex). The 2-oxoglutarate dehydrogenase complex is mainly active in the mitochondrion. A fraction of the 2-oxoglutarate dehydrogenase complex also localizes in the nucleus and is required for lysine succinylation of histones: associates with KAT2A on chromatin and provides succinyl-CoA to histone succinyltransferase KAT2A. In monomeric form may have additional moonlighting function as serine protease. Involved in the hyperactivation of spermatazoa during capacitation and in the spermatazoal acrosome reaction. This chain is Dihydrolipoyl dehydrogenase, mitochondrial (DLD), found in Homo sapiens (Human).